Reading from the N-terminus, the 331-residue chain is 2-isopropylmalate synthase (331 aa).

The Pyruvate carboxyltransferase domain occupies 1 to 80 (RDEVVRGRDV…YTRINTREIY (80 aa)). The Mn(2+) site is built by H15, H17, and N51. Positions 205–331 (QLEHVQFFSG…PSIEEVHRGV (127 aa)) are regulatory domain.

The protein belongs to the alpha-IPM synthase/homocitrate synthase family. LeuA type 1 subfamily. Homotetramer. Mn(2+) serves as cofactor.

The protein localises to the cytoplasm. It catalyses the reaction 3-methyl-2-oxobutanoate + acetyl-CoA + H2O = (2S)-2-isopropylmalate + CoA + H(+). Its pathway is amino-acid biosynthesis; L-leucine biosynthesis; L-leucine from 3-methyl-2-oxobutanoate: step 1/4. Its function is as follows. Catalyzes the condensation of the acetyl group of acetyl-CoA with 3-methyl-2-oxobutanoate (2-oxoisovalerate) to form 3-carboxy-3-hydroxy-4-methylpentanoate (2-isopropylmalate). The chain is 2-isopropylmalate synthase from Thermus thermophilus.